Here is a 168-residue protein sequence, read N- to C-terminus: Photosystem I assembly protein Ycf3 (168 aa).

TPR repeat units lie at residues 35-68 (AFTYYRDGMSAQSEGNYAEALQNYYEAMRLEIDP), 72-105 (SYILYNIGLIHTSNGEHTKALEYYFRALERNPFL), and 120-153 (GEQAIQQGDSELAETWFDQAAEYWKQAIALTPGN).

Belongs to the Ycf3 family.

The protein resides in the plastid. It is found in the chloroplast thylakoid membrane. Functionally, essential for the assembly of the photosystem I (PSI) complex. May act as a chaperone-like factor to guide the assembly of the PSI subunits. This chain is Photosystem I assembly protein Ycf3, found in Ipomoea purpurea (Common morning glory).